We begin with the raw amino-acid sequence, 359 residues long: 4-galactosyl-N-acetylglucosaminide 3-alpha-L-fucosyltransferase FUT6 (359 aa).

Residues 1 to 14 (MDPLGPAKPQWSWR) are Cytoplasmic-facing. A helical; Signal-anchor for type II membrane protein transmembrane segment spans residues 15–34 (CCLTTLLFQLLVAVCFFSYL). Residues 35 to 359 (RVSRDDPTVY…QTRSIAAWFT (325 aa)) lie on the Lumenal side of the membrane. N-linked (GlcNAc...) asparagine glycosylation is found at Asn46, Asn91, Asn153, and Asn184. Residues 73 to 112 (KPIALPRCSEMVPGTADCNITADRKVYPQADAVIVHHREV) form a determines site-specific fucosylation region.

It belongs to the glycosyltransferase 10 family. Homodimer and monomer. Monomer (secreted form). In terms of processing, N-glycosylated. Post-translationally, proteolytic cleavage releases a secreted glycoform of 43 kDa.

The protein resides in the golgi apparatus. It localises to the golgi stack membrane. It is found in the secreted. The catalysed reaction is a beta-D-galactosyl-(1-&gt;4)-N-acetyl-beta-D-glucosaminyl derivative + GDP-beta-L-fucose = a beta-D-galactosyl-(1-&gt;4)-[alpha-L-fucosyl-(1-&gt;3)]-N-acetyl-beta-D-glucosaminyl derivative + GDP + H(+). The enzyme catalyses an N-acetyl-alpha-neuraminyl-(2-&gt;3)-beta-D-galactosyl-(1-&gt;4)-N-acetyl-beta-D-glucosaminyl derivative + GDP-beta-L-fucose = an alpha-Neu5Ac-(2-&gt;3)-beta-D-Gal-(1-&gt;4)-[alpha-L-Fuc-(1-&gt;3)]-beta-D-GlcNAc derivative + GDP + H(+). It carries out the reaction an alpha-Neu5Ac-(2-&gt;3)-beta-D-Gal-(1-&gt;4)-beta-D-GlcNAc-(1-&gt;3)-beta-D-Gal-(1-&gt;4)-[alpha-L-Fuc-(1-&gt;3)]-beta-D-GlcNAc derivative + GDP-beta-L-fucose = an alpha-Neu5Ac-(2-&gt;3)-beta-D-Gal-(1-&gt;4)-[alpha-L-Fuc-(1-&gt;3)]-beta-D-GlcNAc-(1-&gt;3)-beta-D-Gal-(1-&gt;4)-[alpha-L-Fuc-(1-&gt;3)]-beta-D-GlcNAc derivative + GDP + H(+). It catalyses the reaction a neolactoside nLc6Cer + GDP-beta-L-fucose = beta-D-Gal-(1-&gt;4)-[alpha-L-Fuc-(1-&gt;3)]-beta-D-GlcNAc-(1-&gt;3)-beta-D-Gal-(1-&gt;4)-beta-D-GlcNAc-(1-&gt;3)-beta-D-Gal-(1-&gt;4)-beta-D-Glc-(1&lt;-&gt;1')-Cer + GDP + H(+). The catalysed reaction is a neolactoside nLc6Cer + GDP-beta-L-fucose = beta-D-galactosyl-(1-&gt;4)-N-acetyl-beta-D-glucosaminyl-(1-&gt;3)-beta-D-galactosyl-(1-&gt;4)-[alpha-L-fucosyl-(1-&gt;3)]-N-acetyl-beta-D-glucosaminyl-(1-&gt;3)-beta-D-galactosyl-(1-&gt;4)-beta-D-glucosyl-(1&lt;-&gt;1')-ceramide + GDP + H(+). The enzyme catalyses a neolactoside VI(3)-alpha-NeuNAc-nLc6Cer + GDP-beta-L-fucose = a neolactoside VI(3)-alpha-NeuAc,V(3)-alphaFuc-nLc6Cer + GDP + H(+). It carries out the reaction beta-D-galactosyl-(1-&gt;4)-N-acetyl-D-glucosamine + GDP-beta-L-fucose = beta-D-galactosyl-(1-&gt;4)-[alpha-L-fucosyl-(1-&gt;3)]-N-acetyl-D-glucosamine + GDP + H(+). It catalyses the reaction N-acetyl-alpha-neuraminosyl-(2-&gt;3)-beta-D-galactosyl-(1-&gt;4)-N-acetyl-beta-D-glucosamine + GDP-beta-L-fucose = N-acetyl-alpha-neuraminosyl-(2-&gt;3)-beta-D-galactosyl-(1-&gt;4)-[alpha-L-fucosyl-(1-&gt;3)]-N-acetyl-beta-D-glucosamine + GDP + H(+). The catalysed reaction is lactose + GDP-beta-L-fucose = beta-D-galactosyl-(1-&gt;4)-[alpha-L-fucosyl-(1-&gt;3)]-D-glucose + GDP + H(+). The enzyme catalyses alpha-L-Fuc-(1-&gt;2)-beta-D-Gal-(1-&gt;4)-D-Glc + GDP-beta-L-fucose = alpha-L-Fuc-(1-&gt;2)-beta-D-Gal-(1-&gt;4)-[alpha-L-Fuc-(1-&gt;3)]-D-Glc + GDP + H(+). It carries out the reaction a beta-D-galactosyl-(1-&gt;4)-N-acetyl-beta-D-6-sulfooxy-glucosaminyl derivative + GDP-beta-L-fucose = a beta-D-galactosyl-(1-&gt;4)-[alpha-L-fucosyl-(1-&gt;3)]-N-acetyl-beta-D-6-sulfooxy-glucosaminyl derivative + GDP + H(+). The protein operates within protein modification; protein glycosylation. Functionally, catalyzes the transfer of L-fucose, from a guanosine diphosphate-beta-L-fucose, to the N-acetyl glucosamine (GlcNAc) of a distal alpha2,3 sialylated lactosamine unit of a glycoprotein- or glycolipid-linked sialopolylactosamines chain or of a distal or internal lactosamine unit of a neutral glycoprotein- or glycolipid-linked polylactosamines chain through an alpha-1,3 glycosidic linkage and participates in surface expression of the sialyl Lewis X (sLe(x)), Lewis X (Le(x)) and non sialylated VIM2 determinants. Moreover transfers fucose to H-type 2 (Fucalpha1-2Galbeta1-4GlcNAc) chain acceptor substrates and participates in difucosylated sialyl Lewis x determinants. Also fucosylates a polylactosamine substrate having a 6 sulfate modification at the GlcNAc moiety and gives rise to sialyl and non-sialyl 6-sulfo lewis X. Does not have activity towards type 1 ((Galbeta1-3GlcNAc)) and H-type 1 chain (Fucalpha1-2Galbeta1-3GlcNAc) acceptors substrates. The polypeptide is 4-galactosyl-N-acetylglucosaminide 3-alpha-L-fucosyltransferase FUT6 (Pan troglodytes (Chimpanzee)).